We begin with the raw amino-acid sequence, 268 residues long: Enoyl-[acyl-carrier-protein] reductase [NADH] (268 aa).

Residues 20 to 21 (SI), 64 to 65 (DV), and 95 to 96 (IA) each bind NAD(+). Substrate is bound at residue Tyr-157. Positions 164 and 193 each coordinate NAD(+).

The protein belongs to the short-chain dehydrogenases/reductases (SDR) family. FabI subfamily. Homodimer. Homotetramer.

It catalyses the reaction a 2,3-saturated acyl-[ACP] + NAD(+) = a (2E)-enoyl-[ACP] + NADH + H(+). The catalysed reaction is a 2,3-saturated acyl-CoA + NAD(+) = a (2E)-enoyl-CoA + NADH + H(+). The protein operates within lipid metabolism; mycolic acid biosynthesis. Its function is as follows. Enoyl-ACP reductase of the type II fatty acid syntase (FAS-II) system, which is involved in the biosynthesis of mycolic acids, a major component of mycobacterial cell walls. Catalyzes the NADH-dependent reduction of the double bond of 2-trans-enoyl-[acyl-carrier protein], an essential step in the fatty acid elongation cycle of the FAS-II pathway. Shows preference for long-chain fatty acyl thioester substrates, and can also use 2-trans-enoyl-CoAs as alternative substrates. The mycobacterial FAS-II system utilizes the products of the FAS-I system as primers to extend fatty acyl chain lengths up to C56, forming the meromycolate chain that serves as the precursor for final mycolic acids. The sequence is that of Enoyl-[acyl-carrier-protein] reductase [NADH] from Mycobacterium avium.